The chain runs to 420 residues: Histidine--tRNA ligase (420 aa).

The protein belongs to the class-II aminoacyl-tRNA synthetase family. In terms of assembly, homodimer.

Its subcellular location is the cytoplasm. It catalyses the reaction tRNA(His) + L-histidine + ATP = L-histidyl-tRNA(His) + AMP + diphosphate + H(+). The chain is Histidine--tRNA ligase from Thermotoga sp. (strain RQ2).